The sequence spans 81 residues: MNPIISAASVIAAGLAVGLASIGPGVGQGTAAGQALEGIARQPEAEGKIRGTLLLSLAFMEALTIYGLVVALALLFANPFV.

2 helical membrane-spanning segments follow: residues 3–23 (PIIS…ASIG) and 57–77 (LAFM…LLFA).

This sequence belongs to the ATPase C chain family. In terms of assembly, F-type ATPases have 2 components, F(1) - the catalytic core - and F(0) - the membrane proton channel. F(1) has five subunits: alpha(3), beta(3), gamma(1), delta(1), epsilon(1). F(0) has four main subunits: a(1), b(1), b'(1) and c(10-14). The alpha and beta chains form an alternating ring which encloses part of the gamma chain. F(1) is attached to F(0) by a central stalk formed by the gamma and epsilon chains, while a peripheral stalk is formed by the delta, b and b' chains.

The protein resides in the plastid. It localises to the chloroplast thylakoid membrane. In terms of biological role, f(1)F(0) ATP synthase produces ATP from ADP in the presence of a proton or sodium gradient. F-type ATPases consist of two structural domains, F(1) containing the extramembraneous catalytic core and F(0) containing the membrane proton channel, linked together by a central stalk and a peripheral stalk. During catalysis, ATP synthesis in the catalytic domain of F(1) is coupled via a rotary mechanism of the central stalk subunits to proton translocation. Its function is as follows. Key component of the F(0) channel; it plays a direct role in translocation across the membrane. A homomeric c-ring of between 10-14 subunits forms the central stalk rotor element with the F(1) delta and epsilon subunits. The protein is ATP synthase subunit c, chloroplastic of Welwitschia mirabilis (Tree tumbo).